The sequence spans 318 residues: NAC domain-containing protein 59 (318 aa).

Positions 24-174 (LPPGFRFHPT…ECVISRVFHT (151 aa)) constitute an NAC domain. The DNA-binding element occupies 121–180 (VGMKKTLVFYKGRAPKGVKTNWVMHEYRLEGKFAIDNLSKTAKNECVISRVFHTRTDGTK).

As to expression, mostly expressed in root cortex, phloem, atrichoblast and quiescent center (QC), and, to a lower extent, in root endodermis, xylem, pericycle, columella and lateral root cap (LRC). Expressed in roots, cotyledons, very young leaves, senescing leaves, mature flowers and pollen.

Its subcellular location is the nucleus. In terms of biological role, transcription activator that binds to DNA in promoters of target genes on a specific bipartite motif 5'-[AG]CGT[AG](4-5n)[AG][CT]ACGCAA-3'. Triggers the expression of senescence-associated genes during age-, salt- and dark-induced senescence through a regulatory network that may involve cross-talk with salt- and H(2)O(2)-dependent signaling pathways. The protein is NAC domain-containing protein 59 of Arabidopsis thaliana (Mouse-ear cress).